Reading from the N-terminus, the 370-residue chain is UDP-N-acetylglucosamine--N-acetylmuramyl-(pentapeptide) pyrophosphoryl-undecaprenol N-acetylglucosamine transferase (370 aa).

Residues threonine 10–glycine 12, asparagine 126, serine 200, isoleucine 255, and glutamine 300 each bind UDP-N-acetyl-alpha-D-glucosamine.

Belongs to the glycosyltransferase 28 family. MurG subfamily.

It localises to the cell membrane. The catalysed reaction is Mur2Ac(oyl-L-Ala-gamma-D-Glu-L-Lys-D-Ala-D-Ala)-di-trans,octa-cis-undecaprenyl diphosphate + UDP-N-acetyl-alpha-D-glucosamine = beta-D-GlcNAc-(1-&gt;4)-Mur2Ac(oyl-L-Ala-gamma-D-Glu-L-Lys-D-Ala-D-Ala)-di-trans,octa-cis-undecaprenyl diphosphate + UDP + H(+). Its pathway is cell wall biogenesis; peptidoglycan biosynthesis. Its function is as follows. Cell wall formation. Catalyzes the transfer of a GlcNAc subunit on undecaprenyl-pyrophosphoryl-MurNAc-pentapeptide (lipid intermediate I) to form undecaprenyl-pyrophosphoryl-MurNAc-(pentapeptide)GlcNAc (lipid intermediate II). The sequence is that of UDP-N-acetylglucosamine--N-acetylmuramyl-(pentapeptide) pyrophosphoryl-undecaprenol N-acetylglucosamine transferase from Lactobacillus johnsonii (strain CNCM I-12250 / La1 / NCC 533).